Reading from the N-terminus, the 87-residue chain is Neutrophil antibiotic peptide NP-3A (87 aa).

An N-terminal signal peptide occupies residues 1-19 (MRTLTLLTTLLLLALHTQA). A propeptide spanning residues 20 to 58 (ESPQGSTKEAPDEEQDISVFFGGDKGTALQDAAVKAGVT) is cleaved from the precursor. Intrachain disulfides connect Cys-59–Cys-87, Cys-61–Cys-76, and Cys-66–Cys-86.

It belongs to the alpha-defensin family. As to expression, highest expression in bone marrow and to a much lesser extent in small intestine.

The protein localises to the secreted. Its function is as follows. Active in vitro against S.aureus, fungi, Gram-positive and Gram-negative bacteria and to a lesser extent against an enveloped virus. The polypeptide is Neutrophil antibiotic peptide NP-3A (Rattus norvegicus (Rat)).